The following is a 285-amino-acid chain: uncharacterized protein (285 aa).

The helical transmembrane segment at 197 to 217 (PTIGALLSLVSAFFSFIPFLM) threads the bilayer.

The protein localises to the membrane. This is an uncharacterized protein from Saccharomyces cerevisiae (strain ATCC 204508 / S288c) (Baker's yeast).